The sequence spans 297 residues: Acetyl-coenzyme A carboxylase carboxyl transferase subunit beta (297 aa).

Residues Leu25 to Pro294 enclose the CoA carboxyltransferase N-terminal domain.

The protein belongs to the AccD/PCCB family. As to quaternary structure, acetyl-CoA carboxylase is a heterohexamer composed of biotin carboxyl carrier protein (AccB), biotin carboxylase (AccC) and two subunits each of ACCase subunit alpha (AccA) and ACCase subunit beta (AccD).

It is found in the cytoplasm. The catalysed reaction is N(6)-carboxybiotinyl-L-lysyl-[protein] + acetyl-CoA = N(6)-biotinyl-L-lysyl-[protein] + malonyl-CoA. The protein operates within lipid metabolism; malonyl-CoA biosynthesis; malonyl-CoA from acetyl-CoA: step 1/1. Functionally, component of the acetyl coenzyme A carboxylase (ACC) complex. Biotin carboxylase (BC) catalyzes the carboxylation of biotin on its carrier protein (BCCP) and then the CO(2) group is transferred by the transcarboxylase to acetyl-CoA to form malonyl-CoA. This chain is Acetyl-coenzyme A carboxylase carboxyl transferase subunit beta, found in Xanthobacter autotrophicus (strain ATCC BAA-1158 / Py2).